The primary structure comprises 563 residues: Probable lysosomal cobalamin transporter (563 aa).

A run of 5 helical transmembrane segments spans residues 8 to 28, 40 to 60, 95 to 115, 144 to 164, and 188 to 208; these read LIWF…SVFI, FVTF…MLLP, VIYY…IPFA, YTLA…FAPM, and AFTF…VFYT. N-linked (GlcNAc...) asparagine glycosylation occurs at Asn-228. A run of 4 helical transmembrane segments spans residues 314–334, 374–394, 416–436, and 506–526; these read GGFS…MTVI, IIFA…VVAV, MLLA…SVVM, and FGAL…VILV. The interval 537–563 is disordered; the sequence is ERQLDEDAEEAEEESLLASTGRSGNPT. The span at 539-551 shows a compositional bias: acidic residues; it reads QLDEDAEEAEEES.

The protein belongs to the LIMR family. LMBRD1 subfamily.

It localises to the lysosome membrane. Its function is as follows. Probable lysosomal cobalamin transporter. Required to export cobalamin from lysosomes allowing its conversion to cofactors. This chain is Probable lysosomal cobalamin transporter, found in Neosartorya fischeri (strain ATCC 1020 / DSM 3700 / CBS 544.65 / FGSC A1164 / JCM 1740 / NRRL 181 / WB 181) (Aspergillus fischerianus).